The sequence spans 356 residues: Phosphate acyltransferase (356 aa).

The protein belongs to the PlsX family. Homodimer. Probably interacts with PlsY.

It is found in the cytoplasm. It catalyses the reaction a fatty acyl-[ACP] + phosphate = an acyl phosphate + holo-[ACP]. It functions in the pathway lipid metabolism; phospholipid metabolism. In terms of biological role, catalyzes the reversible formation of acyl-phosphate (acyl-PO(4)) from acyl-[acyl-carrier-protein] (acyl-ACP). This enzyme utilizes acyl-ACP as fatty acyl donor, but not acyl-CoA. The chain is Phosphate acyltransferase from Shigella boydii serotype 4 (strain Sb227).